The following is an 83-amino-acid chain: Bublin coiled-coil protein (83 aa).

Positions 1–24 (MSGPNGDLGMPVEAGAEGEEDGFG) are disordered. Residues 25 to 74 (EAEYAAINSMLDQINSCLDHLEEKNDHLHARLQELLESNRQTRLEFQQQL) adopt a coiled-coil conformation. Residue S82 is modified to Phosphoserine.

The protein belongs to the UPF0184 (EST00098) family.

It is found in the cell junction. It localises to the cytoplasm. The protein resides in the cytoskeleton. In terms of biological role, essential for intermediate filament organization in intestinal cells, interacts with intermediate filament and regulates intestinal lumen morphology. The polypeptide is Bublin coiled-coil protein (Homo sapiens (Human)).